The sequence spans 783 residues: Probable galactinol--sucrose galactosyltransferase 5 (783 aa).

Residues serine 9 and serine 11 each carry the phosphoserine modification.

Belongs to the glycosyl hydrolases 36 family.

It carries out the reaction alpha-D-galactosyl-(1-&gt;3)-1D-myo-inositol + sucrose = raffinose + myo-inositol. Transglycosidase operating by a ping-pong reaction mechanism. Involved in the synthesis of raffinose, a major soluble carbohydrate in seeds, roots and tubers. This Arabidopsis thaliana (Mouse-ear cress) protein is Probable galactinol--sucrose galactosyltransferase 5 (RFS5).